A 1014-amino-acid polypeptide reads, in one-letter code: MAESSDKLYRVEYAKSGRASCKKCSESIPKDSLRMAIMVQSPMFDGKVPHWYHFSCFWKVGHSIRHPDVEVDGFSELRWDDQQKVKKTAEAGGVTGKGQDGIGSKAEKTLGDFAAEYAKSNRSTCKGCMEKIEKGQVRLSKKMVDPEKPQLGMIDRWYHPGCFVKNREELGFRPEYSASQLKGFSLLATEDKEALKKQLPGVKSEGKRKGDEVDGVDEVAKKKSKKEKDKDSKLEKALKAQNDLIWNIKDELKKVCSTNDLKELLIFNKQQVPSGESAILDRVADGMVFGALLPCEECSGQLVFKSDAYYCTGDVTAWTKCMVKTQTPNRKEWVTPKEFREISYLKKLKVKKQDRIFPPETSASVAATPPPSTASAPAAVNSSASADKPLSNMKILTLGKLSRNKDEVKAMIEKLGGKLTGTANKASLCISTKKEVEKMNKKMEEVKEANIRVVSEDFLQDVSASTKSLQELFLAHILSPWGAEVKAEPVEVVAPRGKSGAALSKKSKGQVKEEGINKSEKRMKLTLKGGAAVDPDSGLEHSAHVLEKGGKVFSATLGLVDIVKGTNSYYKLQLLEDDKENRYWIFRSWGRVGTVIGSNKLEQMPSKEDAIEHFMKLYEEKTGNAWHSKNFTKYPKKFYPLEIDYGQDEEAVKKLTVNPGTKSKLPKPVQDLIKMIFDVESMKKAMVEYEIDLQKMPLGKLSKRQIQAAYSILSEVQQAVSQGSSDSQILDLSNRFYTLIPHDFGMKKPPLLNNADSVQAKVEMLDNLLDIEVAYSLLRGGSDDSSKDPIDVNYEKLKTDIKVVDRDSEEAEIIRKYVKNTHATTHNAYDLEVIDIFKIEREGECQRYKPFKQLHNRRLLWHGSRTTNFAGILSQGLRIAPPEAPVTGYMFGKGIYFADMVSKSANYCHTSQGDPIGLILLGEVALGNMYELKHASHISKLPKGKHSVKGLGKTTPDPSANISLDGVDVPLGTGISSGVNDTSLLYNEYIVYDIAQVNLKYLLKLKFNFKTSLW.

Ala-2 is modified (N-acetylalanine). A PARP-type 1 zinc finger spans residues 9-93 (YRVEYAKSGR…KVKKTAEAGG (85 aa)). Zn(2+) is bound by residues Cys-21 and Cys-24. Ser-41 is modified (phosphoserine). Zn(2+) is bound by residues His-53 and Cys-56. Lys-97 and Lys-105 each carry N6-acetyllysine. A PARP-type 2 zinc finger spans residues 113 to 203 (FAAEYAKSNR…ALKKQLPGVK (91 aa)). Residues Cys-125 and Cys-128 each coordinate Zn(2+). Lys-131 is modified (N6-acetyllysine). His-159 and Cys-162 together coordinate Zn(2+). A phosphoserine mark is found at Ser-177, Ser-179, and Ser-185. Lys-192 is covalently cross-linked (Glycyl lysine isopeptide (Lys-Gly) (interchain with G-Cter in SUMO2)). Residues 198–233 (QLPGVKSEGKRKGDEVDGVDEVAKKKSKKEKDKDSK) are disordered. Lys-203 participates in a covalent cross-link: Glycyl lysine isopeptide (Lys-Gly) (interchain with G-Cter in SUMO1); alternate. Lys-203 participates in a covalent cross-link: Glycyl lysine isopeptide (Lys-Gly) (interchain with G-Cter in SUMO2); alternate. The span at 204 to 233 (SEGKRKGDEVDGVDEVAKKKSKKEKDKDSK) shows a compositional bias: basic and acidic residues. Short sequence motifs (nuclear localization signal) lie at residues 207 to 209 (KRK) and 221 to 226 (KKKSKK). The region spanning 225-359 (KKEKDKDSKL…VKKQDRIFPP (135 aa)) is the PADR1 zinc-binding domain. A Glycyl lysine isopeptide (Lys-Gly) (interchain with G-Cter in SUMO2) cross-link involves residue Lys-249. Residues Ser-274 and Ser-277 each carry the phosphoserine modification. Residues 290-332 (GALLPCEECSGQLVFKSDAYYCTGDVTAWTKCMVKTQTPNRKE) form a zinc ribbon region. Residues Cys-295, Cys-298, Cys-311, and Cys-321 each contribute to the Zn(2+) site. A disordered region spans residues 361–385 (TSASVAATPPPSTASAPAAVNSSAS). Position 364 is a phosphoserine (Ser-364). Thr-368 is modified (phosphothreonine). Residues 373–524 (TASAPAAVNS…GINKSEKRMK (152 aa)) are automodification domain. One can recognise a BRCT domain in the interval 385–476 (SADKPLSNMK…KSLQELFLAH (92 aa)). Asp-387 is subject to PolyADP-ribosyl aspartic acid. Glu-407, Glu-413, Glu-435, Glu-437, Glu-444, Glu-445, Glu-448, and Glu-456 each carry polyADP-ribosyl glutamic acid. Lys-467 participates in a covalent cross-link: Glycyl lysine isopeptide (Lys-Gly) (interchain with G-Cter in SUMO2). Residues Glu-471 and Glu-484 each carry the polyADP-ribosyl glutamic acid modification. Lys-486 participates in a covalent cross-link: Glycyl lysine isopeptide (Lys-Gly) (interchain with G-Cter in SUMO1); alternate. Lys-486 participates in a covalent cross-link: Glycyl lysine isopeptide (Lys-Gly) (interchain with G-Cter in SUMO2); alternate. 2 positions are modified to polyADP-ribosyl glutamic acid: Glu-488 and Glu-491. ADP-ribosylserine is present on residues Ser-499, Ser-504, and Ser-507. A Glycyl lysine isopeptide (Lys-Gly) (interchain with G-Cter in SUMO2) cross-link involves residue Lys-512. PolyADP-ribosyl glutamic acid occurs at positions 513 and 514. An ADP-ribosylserine modification is found at Ser-519. Glu-520 carries the polyADP-ribosyl glutamic acid modification. N6-(ADP-ribosyl)lysine is present on Lys-521. Lys-528 is covalently cross-linked (Glycyl lysine isopeptide (Lys-Gly) (interchain with G-Cter in SUMO2)). The WGR domain maps to 542–638 (SAHVLEKGGK…KNFTKYPKKF (97 aa)). Position 594 is a phosphothreonine; by PRKDC (Thr-594). N6-acetyllysine is present on residues Lys-600 and Lys-621. The 118-residue stretch at 662–779 (KSKLPKPVQD…DIEVAYSLLR (118 aa)) folds into the PARP alpha-helical domain. Residue Lys-748 forms a Glycyl lysine isopeptide (Lys-Gly) (interchain with G-Cter in SUMO1); alternate linkage. A Glycyl lysine isopeptide (Lys-Gly) (interchain with G-Cter in SUMO2); alternate cross-link involves residue Lys-748. A phosphoserine mark is found at Ser-782 and Ser-786. The PARP catalytic domain maps to 788 to 1014 (DPIDVNYEKL…LKFNFKTSLW (227 aa)). Residues 862-864 (HGS), Gly-871, Arg-878, and Ser-904 each bind NAD(+). Glu-988 acts as the For poly [ADP-ribose] polymerase activity in catalysis.

Belongs to the ARTD/PARP family. As to quaternary structure, homodimer; PARP-type zinc-fingers from separate PARP1 molecules form a dimer module that specifically recognizes DNA strand breaks. Heterodimer; heterodimerizes with PARP2. Interacts (via the PARP catalytic domain) with HPF1. Interacts with NMNAT1. Interacts with nucleosomes; with a preference for nucleosomes containing H2A.X. Interacts with APTX. Component of a base excision repair (BER) complex, containing at least XRCC1, PARP1, PARP2, POLB and LRIG3. Interacts with SRY. The SWAP complex consists of NPM1, NCL, PARP1 and SWAP70. Interacts with TIAM2. Interacts with PARP3; leading to activate PARP1 in absence of DNA. Interacts (when poly-ADP-ribosylated) with CHD1L (via macro domain). Interacts with the DNA polymerase alpha catalytic subunit POLA1; this interaction functions as part of the control of replication fork progression. Interacts with EEF1A1 and TXK. Interacts with RNF4. Interacts with RNF146. Interacts with ZNF423. Interacts with APLF. Interacts with SNAI1 (via zinc fingers); the interaction requires SNAI1 to be poly-ADP-ribosylated and non-phosphorylated (active) by GSK3B. Interacts (when poly-ADP-ribosylated) with PARP9. Interacts with NR4A3; activates PARP1 by improving acetylation of PARP1 and suppressing the interaction between PARP1 and SIRT1. Interacts (via catalytic domain) with PUM3; the interaction inhibits the poly-ADP-ribosylation activity of PARP1 and the degradation of PARP1 by CASP3 following genotoxic stress. Interacts with ZNF365. Interacts with RRP1B. Interacts with TIMELESS; the interaction is direct. Interacts with CGAS; leading to impede the formation of the PARP1-TIMELESS complex. Interacts with KHDC3L, the interaction is increased following the formation of DNA double-strand breaks. Interacts (when auto-poly-ADP-ribosylated) with XRCC1; leading to inhibit PARP1 ADP-ribosyltransferase activity. Interacts with SPINDOC; promoting PARP1 ADP-ribosyltransferase activity. Interacts with BANF1; leading to inhibit PARP1 ADP-ribosyltransferase activity in response to oxidative DNA damage. Interacts (when sumoylated and ubiquitinated) with VCP/p97; leading to its extraction from chromatin. Interacts with YARS1; Interacts with PACMP micropeptide; interaction. Interacts with PACMP micropeptide; Interacts with PACMP micropeptide; interaction. Interacts (when poly-ADP-ribosylated) with isoform 1 of MACROH2A1; MACROH2A1 specifically binds to poly-ADP-ribose chains and inhibits PARP1 activity, limiting the consumption of nuclear NAD(+). Interacts with CARM1; promoting recruitment to replication forks. Interacts with RECQL. Interacts with ZNF32; the interaction reshapes ZNF432 interacting proteins. Interacts with TPRN; TPRN interacts with a number of DNA damage response proteins, is recruited to sites of DNA damage and may play a role in DNA damage repair. In terms of assembly, interacts (when auto-poly-ADP-ribosylated) with AIFM1. (Microbial infection) Interacts with human herpesvirus 8 (KSHV) protein RTA/ORF50; this interaction negatively regulates RTA/ORF50 transactivation activity. In terms of processing, poly-ADP-ribosylated on serine, glutamate and aspartate residues by autocatalysis. Auto-ADP-ribosylation on serine takes place following interaction with HPF1. Auto poly-ADP-ribosylation on serine residues promotes its dissociation from chromatin. Poly-ADP-ribosylated by PARP2; poly-ADP-ribosylation mediates the recruitment of CHD1L to DNA damage sites. Mono-ADP-ribosylated at Lys-521 by SIRT6 in response to oxidative stress, promoting recruitment to double-strand breaks (DSBs) sites. Post-translationally, phosphorylated at Thr-594 by PRKDC in response to DNA damage following virus infection, promoting its translocation to the cytosol. Phosphorylated by TXK. S-nitrosylated, leading to inhibit transcription regulation activity. In terms of processing, proteolytically cleaved by caspase-3 (CASP3) and caspase-7 (CASP7) in response to apoptosis to generate the Poly [ADP-ribose] polymerase 1, processed N-terminus and Poly [ADP-ribose] polymerase 1, processed C-terminus forms. CASP3-mediated cleavage is promoted by the TP53/p53-induced long non-coding RNA SPARCLE, which binds PARP1 in response to genotoxic stress. Post-translationally, sumoylated with SUMO1 or SUMO2 by PIAS4 following prolonged residence (trapping) to chromatin. Sumoylation promotes ubiquitination by RNF4 and removal from chromatin by VCP/p97. Ubiquitinated by RNF4 following sumoylation by PIAS4 in response to prolonged residence (trapping) to chromatin. Ubiquitination promotes removal from chromatin by VCP/p97.

It localises to the chromosome. The protein resides in the nucleus. The protein localises to the nucleolus. Its subcellular location is the cytoplasm. It is found in the cytosol. It carries out the reaction NAD(+) + (ADP-D-ribosyl)n-acceptor = nicotinamide + (ADP-D-ribosyl)n+1-acceptor + H(+).. The catalysed reaction is L-seryl-[protein] + NAD(+) = O-(ADP-D-ribosyl)-L-seryl-[protein] + nicotinamide + H(+). The enzyme catalyses L-aspartyl-[protein] + NAD(+) = 4-O-(ADP-D-ribosyl)-L-aspartyl-[protein] + nicotinamide. It catalyses the reaction L-glutamyl-[protein] + NAD(+) = 5-O-(ADP-D-ribosyl)-L-glutamyl-[protein] + nicotinamide. It carries out the reaction L-tyrosyl-[protein] + NAD(+) = O-(ADP-D-ribosyl)-L-tyrosyl-[protein] + nicotinamide + H(+). The catalysed reaction is L-histidyl-[protein] + NAD(+) = N(tele)-(ADP-D-ribosyl)-L-histidyl-[protein] + nicotinamide + H(+). With respect to regulation, ADP-ribosyltransferase activity is regulated via an allosteric activation mechanism. In absence of activation signal, PARP1 is autoinhibited by the PARP alpha-helical domain (also named HD region), which prevents effective NAD(+)-binding. Activity is highly stimulated by signals, such as DNA strand breaks. Binding to damaged DNA unfolds the PARP alpha-helical domain, relieving autoinhibition. Poly-ADP-ribosyltransferase activity is tightly regulated and PARP1 is removed from damaged chromatin following initial poly-ADP-ribosylation of chromatin to avoid prolonged residence (trapping) that has cytotoxic consequences. A number of factors (VCP/p97) or post-translational modifications (auto-poly-ADP-ribosylation or ubiquitination) promote PARP1 removal from chromatin. ADP-ribosyltransferase activity is inhibited by a number of PARP inhibitors (PARPi) compounds, that are used the treatment of breast or ovarian cancers that have defects in DNA repair by homologous recombination. PARPi molecules can be classified in three categories: type I compounds (EB-47, UKTT15 and BAD) that promote allosteric retention of PARP1 on DNA, type II inhibitors (talazoparib and olaparib) that mediate a non-allosteric inhibition, and type III inhibitors (rucaparib, niraparib, and veliparib) that promote allosteric release from DNA. Trapping to chromatin by PARPi molecules triggers activation of the cGAS-STING pathway. Poly-ADP-ribosyltransferase that mediates poly-ADP-ribosylation of proteins and plays a key role in DNA repair. Mediates glutamate, aspartate, serine, histidine or tyrosine ADP-ribosylation of proteins: the ADP-D-ribosyl group of NAD(+) is transferred to the acceptor carboxyl group of target residues and further ADP-ribosyl groups are transferred to the 2'-position of the terminal adenosine moiety, building up a polymer with an average chain length of 20-30 units. Serine ADP-ribosylation of proteins constitutes the primary form of ADP-ribosylation of proteins in response to DNA damage. Specificity for the different amino acids is conferred by interacting factors, such as HPF1 and NMNAT1. Following interaction with HPF1, catalyzes serine ADP-ribosylation of target proteins; HPF1 confers serine specificity by completing the PARP1 active site. Also catalyzes tyrosine ADP-ribosylation of target proteins following interaction with HPF1. Following interaction with NMNAT1, catalyzes glutamate and aspartate ADP-ribosylation of target proteins; NMNAT1 confers glutamate and aspartate specificity. PARP1 initiates the repair of DNA breaks: recognizes and binds DNA breaks within chromatin and recruits HPF1, licensing serine ADP-ribosylation of target proteins, such as histones (H2BS6ADPr and H3S10ADPr), thereby promoting decompaction of chromatin and the recruitment of repair factors leading to the reparation of DNA strand breaks. HPF1 initiates serine ADP-ribosylation but restricts the polymerase activity of PARP1 in order to limit the length of poly-ADP-ribose chains. In addition to base excision repair (BER) pathway, also involved in double-strand breaks (DSBs) repair: together with TIMELESS, accumulates at DNA damage sites and promotes homologous recombination repair by mediating poly-ADP-ribosylation. Mediates the poly-ADP-ribosylation of a number of proteins, including itself, APLF, CHFR, RPA1 and NFAT5. In addition to proteins, also able to ADP-ribosylate DNA: catalyzes ADP-ribosylation of DNA strand break termini containing terminal phosphates and a 2'-OH group in single- and double-stranded DNA, respectively. Required for PARP9 and DTX3L recruitment to DNA damage sites. PARP1-dependent PARP9-DTX3L-mediated ubiquitination promotes the rapid and specific recruitment of 53BP1/TP53BP1, UIMC1/RAP80, and BRCA1 to DNA damage sites. PARP1-mediated DNA repair in neurons plays a role in sleep: senses DNA damage in neurons and promotes sleep, facilitating efficient DNA repair. In addition to DNA repair, also involved in other processes, such as transcription regulation, programmed cell death, membrane repair, adipogenesis and innate immunity. Acts as a repressor of transcription: binds to nucleosomes and modulates chromatin structure in a manner similar to histone H1, thereby altering RNA polymerase II. Acts both as a positive and negative regulator of transcription elongation, depending on the context. Acts as a positive regulator of transcription elongation by mediating poly-ADP-ribosylation of NELFE, preventing RNA-binding activity of NELFE and relieving transcription pausing. Acts as a negative regulator of transcription elongation in response to DNA damage by catalyzing poly-ADP-ribosylation of CCNT1, disrupting the phase separation activity of CCNT1 and subsequent activation of CDK9. Involved in replication fork progression following interaction with CARM1: mediates poly-ADP-ribosylation at replication forks, slowing fork progression. Poly-ADP-ribose chains generated by PARP1 also play a role in poly-ADP-ribose-dependent cell death, a process named parthanatos. Also acts as a negative regulator of the cGAS-STING pathway. Acts by mediating poly-ADP-ribosylation of CGAS: PARP1 translocates into the cytosol following phosphorylation by PRKDC and catalyzes poly-ADP-ribosylation and inactivation of CGAS. Acts as a negative regulator of adipogenesis: catalyzes poly-ADP-ribosylation of histone H2B on 'Glu-35' (H2BE35ADPr) following interaction with NMNAT1, inhibiting phosphorylation of H2B at 'Ser-36' (H2BS36ph), thereby blocking expression of pro-adipogenetic genes. Involved in the synthesis of ATP in the nucleus, together with NMNAT1, PARG and NUDT5. Nuclear ATP generation is required for extensive chromatin remodeling events that are energy-consuming. Its function is as follows. Promotes AIFM1-mediated apoptosis. This form, which translocates into the cytoplasm following cleavage by caspase-3 (CASP3) and caspase-7 (CASP7) in response to apoptosis, is auto-poly-ADP-ribosylated and serves as a poly-ADP-ribose carrier to induce AIFM1-mediated apoptosis. In terms of biological role, this cleavage form irreversibly binds to DNA breaks and interferes with DNA repair, promoting DNA damage-induced apoptosis. This is Poly [ADP-ribose] polymerase 1 from Homo sapiens (Human).